A 252-amino-acid polypeptide reads, in one-letter code: Aliphatic sulfonates import ATP-binding protein SsuB 1 (252 aa).

An ABC transporter domain is found at 6-234 (LQLHIAGKRF…PRDRQAHEAA (229 aa)). 38-45 (GASGCGKS) serves as a coordination point for ATP.

It belongs to the ABC transporter superfamily. Aliphatic sulfonates importer (TC 3.A.1.17.2) family. The complex is composed of two ATP-binding proteins (SsuB), two transmembrane proteins (SsuC) and a solute-binding protein (SsuA).

The protein resides in the cell inner membrane. It carries out the reaction ATP + H2O + aliphatic sulfonate-[sulfonate-binding protein]Side 1 = ADP + phosphate + aliphatic sulfonateSide 2 + [sulfonate-binding protein]Side 1.. Its function is as follows. Part of the ABC transporter complex SsuABC involved in aliphatic sulfonates import. Responsible for energy coupling to the transport system. In Xanthomonas axonopodis pv. citri (strain 306), this protein is Aliphatic sulfonates import ATP-binding protein SsuB 1.